Here is a 127-residue protein sequence, read N- to C-terminus: Nuclear transport factor 2 (127 aa).

One can recognise an NTF2 domain in the interval 11-124 (VGKQFVEHYY…FLLINDFFRL (114 aa)).

The protein resides in the cytoplasm. It localises to the cytosol. The protein localises to the nucleus outer membrane. It is found in the nucleus. Its subcellular location is the nuclear pore complex. The protein resides in the nucleus inner membrane. It localises to the nucleoplasm. Mediates the import of GDP-bound RAN from the cytoplasm into the nucleus which is essential for the function of RAN in cargo receptor-mediated nucleocytoplasmic transport. Thereby, plays indirectly a more general role in cargo receptor-mediated nucleocytoplasmic transport. Interacts with GDP-bound RAN in the cytosol, recruits it to the nuclear pore complex via its interaction with nucleoporins and promotes its nuclear import. This chain is Nuclear transport factor 2, found in Dictyostelium discoideum (Social amoeba).